The primary structure comprises 354 residues: DNA integrity scanning protein DisA (354 aa).

The DAC domain maps to 6-144; that stretch reads DDELKKILKI…GDIKYVLRDS (139 aa). ATP contacts are provided by residues G73, L91, and 104-108; that span reads TRHRT.

It belongs to the DisA family. Homooctamer. It depends on Mg(2+) as a cofactor.

It catalyses the reaction 2 ATP = 3',3'-c-di-AMP + 2 diphosphate. Its function is as follows. Participates in a DNA-damage check-point that is active prior to asymmetric division when DNA is damaged. DisA forms globular foci that rapidly scan along the chromosomes during sporulation, searching for lesions. When a lesion is present, DisA pauses at the lesion site. This triggers a cellular response that culminates in a temporary block in sporulation initiation. In terms of biological role, also has diadenylate cyclase activity, catalyzing the condensation of 2 ATP molecules into cyclic di-AMP (c-di-AMP). c-di-AMP acts as a signaling molecule that couples DNA integrity with progression of sporulation. The rise in c-di-AMP level generated by DisA while scanning the chromosome, operates as a positive signal that advances sporulation; upon encountering a lesion, the DisA focus arrests at the damaged site and halts c-di-AMP synthesis. This chain is DNA integrity scanning protein DisA, found in Clostridium perfringens (strain 13 / Type A).